The chain runs to 679 residues: MSDDDDKIYIYSDLFSKNFSDDEKDDSYEREKQVYSGSETQNAENEYSKLRAQNSTILNNYFDNDNIKNVENLKSNDPDQIDLILFPVNKNYYMNLFDGQLIENIHSIKLRKAGFYAIYVENNNNSKWDGIYFGLSRMQVELDYKLITKKNKDGGEYEKRNTSSYDNTESVQNTVGSEKEETENKNEETSNYNSNLNNEINKICKYNLDQTDILLDDSNSERRRNSKFKIKNTNYYDNLMLQNKYTNSILYDDDDDKNNTETYTCTFKTEDQIRVPSQKKKYIYLYNKYDNATLDLNVHTYMSLGMSILCKYSLLYCGKYNHIPRDPYTPFKKPVSILSLDGGGILTISTLLVLNRLEAELRKEIGSDDIKLIDCFDMVCGTSAGGLISLALLREIDLQDVSNMWPSTIKKVFEGNRNIISGIFFEGYDVNNVKDVFLERMGNKFMSSYKKFYCFVTATDVKHKPYKLFLIRNYTHKYNSINAESYDGINKVPLWLAAWATASAPTYLKGPSAEDIKKLGINIKPEIHLVDGALKASNPALIALEECARLNNKNLSTFIKEDLDTLVSIGTGQVPTKLTQSGASSKSASTFEILINSTHLLTRANDTHREVLQRLADRENTYFRFNVPHIGDIEIDSQDVRDFDLISKATQDYLFDEKFYEIKRLAHKLANNYIRSKYL.

Disordered regions lie at residues 19-45 (FSDD…NAEN) and 155-194 (GEYE…NYNS). Composition is skewed to polar residues over residues 35–45 (YSGSETQNAEN) and 162–176 (TSSY…NTVG). The span at 177-188 (SEKEETENKNEE) shows a compositional bias: basic and acidic residues. Residues 338–544 (LSLDGGGILT…KASNPALIAL (207 aa)) form the PNPLA domain. A GXSXG motif is present at residues 381 to 385 (GTSAG). Residue S383 is the Nucleophile of the active site. D531 (proton acceptor) is an active-site residue. The short motif at 531–533 (DGA) is the DGA/G element.

It belongs to the patatin family.

Its subcellular location is the cytoplasm. The catalysed reaction is a 1,2-diacyl-sn-glycero-3-phosphocholine + H2O = a 1-acyl-sn-glycero-3-phosphocholine + a fatty acid + H(+). It catalyses the reaction 1,2-dihexadecanoyl-sn-glycero-3-phosphocholine + H2O = 1-hexadecanoyl-sn-glycero-3-phosphocholine + hexadecanoate + H(+). Its function is as follows. Hydrolyzes the ester bond of the fatty acyl group attached at the sn-2 position of phospholipids such as phosphatidylcholine. Involved in gametogenesis; however, it is not clear whether it is involved in gametocytes development in host erythrocytes or in gametocyte activation in the mosquito midgut. Involved in gametocyte development in host erythrocytes; however, not involved in gametocytes activation including male gamete exflagellation. Involved in the rounding up of gametocytes following activation in the mosquito midgut; however, not required for gametocyte development in host erythrocytes. Required for exflagellation of activated male gametocytes. Involved in gametocytes egress from host erythrocytes by promoting the relocalization of perforin-like protein PLP2-containing vesicles to the periphery of gametocytes; PLP2 secretion is required for permeabilization of the erythrocyte membrane and thus, promotes gametocyte egress. Dispensable for asexual blood stage development. The sequence is that of Patatin-like phospholipase 1 from Plasmodium falciparum (isolate NF54).